Consider the following 75-residue polypeptide: Cytochrome c oxidase subunit 6C (75 aa).

Residues Met-1–Gly-13 lie on the Mitochondrial matrix side of the membrane. A helical transmembrane segment spans residues Leu-14–Arg-54. The Mitochondrial intermembrane segment spans residues Asn-55–Lys-75.

The protein belongs to the cytochrome c oxidase subunit 6c family. In terms of assembly, component of the cytochrome c oxidase (complex IV, CIV), a multisubunit enzyme composed of 14 subunits. The complex is composed of a catalytic core of 3 subunits MT-CO1, MT-CO2 and MT-CO3, encoded in the mitochondrial DNA, and 11 supernumerary subunits COX4I, COX5A, COX5B, COX6A, COX6B, COX6C, COX7A, COX7B, COX7C, COX8 and NDUFA4, which are encoded in the nuclear genome. The complex exists as a monomer or a dimer and forms supercomplexes (SCs) in the inner mitochondrial membrane with NADH-ubiquinone oxidoreductase (complex I, CI) and ubiquinol-cytochrome c oxidoreductase (cytochrome b-c1 complex, complex III, CIII), resulting in different assemblies (supercomplex SCI(1)III(2)IV(1) and megacomplex MCI(2)III(2)IV(2)).

It localises to the mitochondrion inner membrane. It functions in the pathway energy metabolism; oxidative phosphorylation. In terms of biological role, component of the cytochrome c oxidase, the last enzyme in the mitochondrial electron transport chain which drives oxidative phosphorylation. The respiratory chain contains 3 multisubunit complexes succinate dehydrogenase (complex II, CII), ubiquinol-cytochrome c oxidoreductase (cytochrome b-c1 complex, complex III, CIII) and cytochrome c oxidase (complex IV, CIV), that cooperate to transfer electrons derived from NADH and succinate to molecular oxygen, creating an electrochemical gradient over the inner membrane that drives transmembrane transport and the ATP synthase. Cytochrome c oxidase is the component of the respiratory chain that catalyzes the reduction of oxygen to water. Electrons originating from reduced cytochrome c in the intermembrane space (IMS) are transferred via the dinuclear copper A center (CU(A)) of subunit 2 and heme A of subunit 1 to the active site in subunit 1, a binuclear center (BNC) formed by heme A3 and copper B (CU(B)). The BNC reduces molecular oxygen to 2 water molecules using 4 electrons from cytochrome c in the IMS and 4 protons from the mitochondrial matrix. The sequence is that of Cytochrome c oxidase subunit 6C (COX6C) from Trachypithecus cristatus (Silvered leaf-monkey).